A 100-amino-acid polypeptide reads, in one-letter code: Aspartyl/glutamyl-tRNA(Asn/Gln) amidotransferase subunit C (100 aa).

The protein belongs to the GatC family. In terms of assembly, heterotrimer of A, B and C subunits.

It catalyses the reaction L-glutamyl-tRNA(Gln) + L-glutamine + ATP + H2O = L-glutaminyl-tRNA(Gln) + L-glutamate + ADP + phosphate + H(+). The catalysed reaction is L-aspartyl-tRNA(Asn) + L-glutamine + ATP + H2O = L-asparaginyl-tRNA(Asn) + L-glutamate + ADP + phosphate + 2 H(+). In terms of biological role, allows the formation of correctly charged Asn-tRNA(Asn) or Gln-tRNA(Gln) through the transamidation of misacylated Asp-tRNA(Asn) or Glu-tRNA(Gln) in organisms which lack either or both of asparaginyl-tRNA or glutaminyl-tRNA synthetases. The reaction takes place in the presence of glutamine and ATP through an activated phospho-Asp-tRNA(Asn) or phospho-Glu-tRNA(Gln). The sequence is that of Aspartyl/glutamyl-tRNA(Asn/Gln) amidotransferase subunit C from Streptococcus pyogenes serotype M49 (strain NZ131).